Here is a 422-residue protein sequence, read N- to C-terminus: Serine protease HTRA2, mitochondrial (422 aa).

The N-terminal 17 residues, 1–17 (MALRGSHRLQVILKRCI), are a transit peptide targeting the mitochondrion. The propeptide occupies 18–74 (ASPLFHSHAPNRRSSQPAIKGGEPNSNGNSGHDQQNGERKGKGWRRLVSFFVPFSLG). A disordered region spans residues 24–56 (SHAPNRRSSQPAIKGGEPNSNGNSGHDQQNGER). The segment covering 41–51 (PNSNGNSGHDQ) has biased composition (polar residues). Residues 64 to 82 (LVSFFVPFSLGAVVSAAVI) traverse the membrane as a helical segment. 2 consecutive short sequence motifs (IAP-binding) follow at residues 75-78 (AVVS) and 94-97 (SKMT). Positions 139–302 (SNGSGFIIEQ…IPIDYVKVFL (164 aa)) are serine protease. Residues His157, Asp189, and Ser266 each act as charge relay system in the active site. Residues 325–410 (MGITMLTLTP…NLDIVILRGV (86 aa)) form the PDZ domain.

The protein belongs to the peptidase S1C family. In terms of assembly, interacts with th/DIAP1 (via BIR 2 domain).

The protein resides in the mitochondrion intermembrane space. It localises to the mitochondrion membrane. It catalyses the reaction Cleavage of non-polar aliphatic amino-acids at the P1 position, with a preference for Val, Ile and Met. At the P2 and P3 positions, Arg is selected most strongly with a secondary preference for other hydrophilic residues.. Serine protease that shows proteolytic activity against a non-specific substrate beta-casein. Promotes or induces cell death either by direct binding to and inhibition of BIRC proteins (also called inhibitor of apoptosis proteins, IAPs), leading to an increase in caspase activity, or by a BIRC inhibition-independent, caspase-independent and serine protease activity-dependent mechanism. Can antagonize antiapoptotic activity of th/Diap1 by directly inducing the degradation of th/Diap1. In Drosophila erecta (Fruit fly), this protein is Serine protease HTRA2, mitochondrial.